We begin with the raw amino-acid sequence, 132 residues long: Dehydratase CTB10 (132 aa).

In terms of domain architecture, EthD spans 21-117 (PDQSEEDHHN…IPDHFNFADM (97 aa)).

This sequence belongs to the tpcK family.

It functions in the pathway mycotoxin biosynthesis. Dehydratase; part of the gene cluster that mediates the biosynthesis of cercosporin, a light-activated, non-host-selective toxin. The perylenequinone chromophore of cercosporin absorbs light energy to attain an electronically-activated triplet state and produces active oxygen species such as the hydroxyl radical, superoxide, hydrogen peroxide or singlet oxygen upon reaction with oxygen molecules. These reactive oxygen species cause damage to various cellular components including lipids, proteins and nucleic acids. The first step of cercosporin biosynthesis is performed by the polyketide synthase CTB1 which catalyzes the formation of nor-toralactone. The starter unit acyltransferase (SAT) domain of CTB1 initiates polyketide extension by the selective utilization of acetyl-CoA, which is elongated to the heptaketide in the beta-ketoacyl synthase (KS) domain by successive condensations with six malonyl units introduced by the malonyl acyltransferase (MAT) domain. The product template (PT) domain catalyzes C4-C9 and C2-C11 aldol cyclizations and dehydrations to a trihydroxynaphthalene, which is thought to be delivered to the thioesterase (TE) domain for product release. The bifunctional enzyme CTB3 then methylates nor-toralactone to toralactone before conducting an unusual oxidative aromatic ring opening. The O-methyltransferase CTB2 further methylates the nascent OH-6 of the CBT3 product, blocking further oxidation at this site before the reductase CTB6 reduces the 2-oxopropyl ketone at position C7, giving naphthalene. The FAD-dependent monooxygenase CTB5 in concert with the multicopper oxidase CTB12 are responsible for homodimerization of naphthalene with CTB7 installing the dioxepine moiety, finally producing cercosporin. The fasciclin domain-containing protein CTB11 might act with CTB5 and CTB12 whereas the roles of CTB9 and CTB10 have still to be elucidated. The sequence is that of Dehydratase CTB10 from Cercospora beticola (Sugarbeet leaf spot fungus).